A 308-amino-acid polypeptide reads, in one-letter code: Pseudouridine-5'-phosphate glycosidase (308 aa).

The active-site Proton donor is E29. Substrate is bound by residues K90 and V110. Mn(2+) is bound at residue D142. 144–146 (SSD) is a binding site for substrate. The active-site Nucleophile is the K163.

It belongs to the pseudouridine-5'-phosphate glycosidase family. In terms of assembly, homotrimer. Mn(2+) serves as cofactor.

The enzyme catalyses D-ribose 5-phosphate + uracil = psi-UMP + H2O. Catalyzes the reversible cleavage of pseudouridine 5'-phosphate (PsiMP) to ribose 5-phosphate and uracil. Functions biologically in the cleavage direction, as part of a pseudouridine degradation pathway. This is Pseudouridine-5'-phosphate glycosidase from Serratia proteamaculans (strain 568).